The sequence spans 100 residues: Large ribosomal subunit protein bL28 (100 aa).

The protein belongs to the bacterial ribosomal protein bL28 family.

This chain is Large ribosomal subunit protein bL28, found in Gluconacetobacter diazotrophicus (strain ATCC 49037 / DSM 5601 / CCUG 37298 / CIP 103539 / LMG 7603 / PAl5).